Reading from the N-terminus, the 553-residue chain is Hyaluronan synthase 3 (553 aa).

Residues 1–15 (MPVQLTTALRVVGTS) are Cytoplasmic-facing. Residues 16-36 (LFALAVLGGILAAYVTGYQFI) traverse the membrane as a helical segment. The Extracellular portion of the chain corresponds to 37–44 (HTEKHYLS). The chain crosses the membrane as a helical span at residues 45-65 (FGLYGAILGLHLLIQSLFAFL). Residues 66–377 (EHRRMRRAGQ…NSLWFHKHHL (312 aa)) are Cytoplasmic-facing. The helical transmembrane segment at 378-398 (WMTYESVVTGFFPFFLIATVI) threads the bilayer. At 399–408 (QLFYRGRIWN) the chain is on the extracellular side. A helical membrane pass occupies residues 409–429 (ILLFLLTVQLVGIIKATYACF). At 430–440 (LRGNAEMIFMS) the chain is on the cytoplasmic side. Residues 441–461 (LYSLLYMSSLLPAKIFAIATI) form a helical membrane-spanning segment. An N-linked (GlcNAc...) asparagine glycan is attached at asparagine 462. The Extracellular segment spans residues 462–473 (NKSGWGTSGRKT). Residues 474–494 (IVVNFIGLIPVSIWVAVLLGG) form a helical membrane-spanning segment. The Cytoplasmic segment spans residues 495 to 515 (LAYTAYCQDLFSETELAFLVS). The helical transmembrane segment at 516–536 (GAILYGCYWVALLMLYLAIIA) threads the bilayer. Over 537 to 553 (RRCGKKPEQYSLAFAEV) the chain is Extracellular.

The protein belongs to the NodC/HAS family. As to quaternary structure, homodimers. Forms heterodimers with HAS2 and HAS1. Requires Mg(2+) as cofactor. Post-translationally, O-GlcNAcylation increases the hyaluronan synthase activity, HAS3 stability and its plasma membrane residence. The concentration of UDP-GlcNAc controls the level of O-GlcNAc modification.

The protein resides in the cell membrane. The protein localises to the golgi apparatus membrane. It localises to the golgi apparatus. Its subcellular location is the trans-Golgi network membrane. It is found in the early endosome. It carries out the reaction [hyaluronan](n) + UDP-N-acetyl-alpha-D-glucosamine = N-acetyl-beta-D-glucosaminyl-(1-&gt;4)-[hyaluronan](n) + UDP + H(+). The enzyme catalyses N-acetyl-beta-D-glucosaminyl-(1-&gt;4)-[hyaluronan](n) + UDP-alpha-D-glucuronate = [hyaluronan](n+1) + UDP + H(+). It functions in the pathway glycan biosynthesis; hyaluronan biosynthesis. With respect to regulation, the enzymatic activity depends on the availability of cytosolic levels of UDP-GlcUA and UDP-GlcNAc. Catalyzes the addition of GlcNAc or GlcUA monosaccharides to the nascent hyaluronan polymer. Therefore, it is essential to hyaluronan synthesis a major component of most extracellular matrices that has a structural role in tissues architectures and regulates cell adhesion, migration and differentiation. This is one of three isoenzymes responsible for cellular hyaluronan synthesis. This chain is Hyaluronan synthase 3, found in Homo sapiens (Human).